Consider the following 195-residue polypeptide: Molybdopterin synthase catalytic subunit (195 aa).

Residues 1–37 (MSARPEPQPGSERNATEPLPSHLDPTTYPRTLTTTHG) form a disordered region. Over residues 25–37 (PTTYPRTLTTTHG) the composition is skewed to low complexity. Substrate is bound by residues 141-142 (HR), lysine 157, and 164-166 (KRE).

It belongs to the MoaE family. MOCS2B subfamily. In terms of assembly, heterotetramer; composed of 2 small (MOCS2A) and 2 large (MOCS2B) subunits.

The protein localises to the cytoplasm. It catalyses the reaction 2 [molybdopterin-synthase sulfur-carrier protein]-C-terminal-Gly-aminoethanethioate + cyclic pyranopterin phosphate + H2O = molybdopterin + 2 [molybdopterin-synthase sulfur-carrier protein]-C-terminal Gly-Gly + 2 H(+). It functions in the pathway cofactor biosynthesis; molybdopterin biosynthesis. Catalytic subunit of the molybdopterin synthase complex, a complex that catalyzes the conversion of precursor Z into molybdopterin. Acts by mediating the incorporation of 2 sulfur atoms from thiocarboxylated MOCS2A into precursor Z to generate a dithiolene group. This chain is Molybdopterin synthase catalytic subunit, found in Emericella nidulans (strain FGSC A4 / ATCC 38163 / CBS 112.46 / NRRL 194 / M139) (Aspergillus nidulans).